Reading from the N-terminus, the 494-residue chain is Glucose-6-phosphate 1-dehydrogenase (494 aa).

NADP(+) is bound by residues arginine 46 and lysine 150. Residues histidine 180, lysine 184, glutamate 218, and aspartate 237 each contribute to the substrate site. The active-site Proton acceptor is histidine 242. Lysine 342 is a substrate binding site.

Belongs to the glucose-6-phosphate dehydrogenase family.

It carries out the reaction D-glucose 6-phosphate + NADP(+) = 6-phospho-D-glucono-1,5-lactone + NADPH + H(+). It participates in carbohydrate degradation; pentose phosphate pathway; D-ribulose 5-phosphate from D-glucose 6-phosphate (oxidative stage): step 1/3. Its function is as follows. Catalyzes the oxidation of glucose 6-phosphate to 6-phosphogluconolactone. The polypeptide is Glucose-6-phosphate 1-dehydrogenase (Aggregatibacter actinomycetemcomitans (Actinobacillus actinomycetemcomitans)).